A 530-amino-acid chain; its full sequence is Amidase FVEG_08295 (530 aa).

Residues K138 and S214 each act as charge relay system in the active site. Substrate-binding positions include S214 and 235–238; that span reads IAGS. S238 functions as the Acyl-ester intermediate in the catalytic mechanism.

It belongs to the amidase family.

It catalyses the reaction a monocarboxylic acid amide + H2O = a monocarboxylate + NH4(+). It participates in xenobiotic degradation. In terms of biological role, amidase; part of the Fusarium detoxification of benzoxazolinone cluster 1 (FDB1) involved in the degradation of benzoxazolinones produced by the host plant. Maize, wheat, and rye produce the 2 benzoxazinone phytoanticipins 2,4-dihy-droxy-7-methoxy-1,4-benzoxazin-3-one (DIMBOA) and 2,4-dihydroxy-1,4-benzoxazin-3-one (DIBOA) that, due to their inherent instability once released, spontaneously degrade to the more stable corresponding benzoxazolinones, 6-methoxy-2-benzoxazolinone (MBOA) and 2-benzoxazolinone (BOA), respectively. The first step in the detoxification of benzoxazolinones involves the hydrolysis of the cyclic ester bond of benzoxazolinones by the FDB1 cluster gamma-lactamase MBL1 to aminophenols. MBL1 is able to convert BOA into 2-aminophenol (2-AP), as well as MBOA into 5-methoxy-2-aminophenol (2-AMP). The FDB2 cluster N-malonyltransferase FDB2/NAT1 then metabolizes aminophenols via N-malonylation to non-toxic malonamic acids. FDB2/NAT1 converts 2-AP into N-(2-hydroxyphenyl) malonamic acid (HPMA) and 2-AMP into N-(2-hydroxy-4-methoxyphenyl) malonamic acid (HMPMA). The duplicated dienlactone hydrolases DLH1 and DLH2 may provide redundant function for hydrolyzing the lactone moiety in the BOA molecule. The roles of the amidases an other enzymes encoded by the 2 FDB clusters have not been identified so far. This chain is Amidase FVEG_08295, found in Gibberella moniliformis (strain M3125 / FGSC 7600) (Maize ear and stalk rot fungus).